The following is a 245-amino-acid chain: MAMGATVRAAAADAVVTFLWVLCASALGASTAAVTSYLGVQEGAGHYALLVTTSLLSVLLFTFDLLCGALGGASFNPTDFAASYAAGLDSPSLFSVALRFPAQAAGAVGGALAISELMPAQYKHTLAGPSLKVDPHTGALAEGVLTFVITLTVLWVIVKGPRNVILKTLLLSTSIVSVILAGAEYTGPSMNPANAFGWAYVNNWHNTWEQLYVYWICPFIGAMLAGWIFRVVFLPPAPKPKTKKA.

The next 2 membrane-spanning stretches (helical) occupy residues 14–34 (AVVT…TAAV) and 55–75 (LLSV…GASF). Positions 76–78 (NPT) match the NPA 1 motif. 3 helical membrane passes run 100-120 (FPAQ…LMPA), 138-158 (GALA…WVIV), and 164-184 (VILK…AGAE). The NPA 2 motif lies at 191–193 (NPA). Residues 213 to 233 (VYWICPFIGAMLAGWIFRVVF) form a helical membrane-spanning segment.

This sequence belongs to the MIP/aquaporin (TC 1.A.8) family. SIP (TC 1.A.8.10) subfamily.

The protein resides in the membrane. In terms of biological role, aquaporins facilitate the transport of water and small neutral solutes across cell membranes. The polypeptide is Aquaporin SIP1-1 (SIP1-1) (Zea mays (Maize)).